The following is a 332-amino-acid chain: tRNA N6-adenosine threonylcarbamoyltransferase (332 aa).

His-107 and His-111 together coordinate Fe cation. Residues 129 to 133, Asp-162, Gly-175, and Asn-267 contribute to the substrate site; that span reads LVSGG. A Fe cation-binding site is contributed by Asp-295.

It belongs to the KAE1 / TsaD family. It depends on Fe(2+) as a cofactor.

Its subcellular location is the cytoplasm. The enzyme catalyses L-threonylcarbamoyladenylate + adenosine(37) in tRNA = N(6)-L-threonylcarbamoyladenosine(37) in tRNA + AMP + H(+). In terms of biological role, required for the formation of a threonylcarbamoyl group on adenosine at position 37 (t(6)A37) in tRNAs that read codons beginning with adenine. Is involved in the transfer of the threonylcarbamoyl moiety of threonylcarbamoyl-AMP (TC-AMP) to the N6 group of A37, together with TsaE and TsaB. TsaD likely plays a direct catalytic role in this reaction. The protein is tRNA N6-adenosine threonylcarbamoyltransferase of Campylobacter hominis (strain ATCC BAA-381 / DSM 21671 / CCUG 45161 / LMG 19568 / NCTC 13146 / CH001A).